We begin with the raw amino-acid sequence, 880 residues long: Valine--tRNA ligase (880 aa).

The 'HIGH' region motif lies at 49–59; sequence PNVTGKLHLGH. The short motif at 525–529 is the 'KMSKS' region element; the sequence is KMSKS. Lysine 528 is an ATP binding site. Residues 809–879 are a coiled coil; that stretch reads LAGLLDLEEE…AVRARIKELK (71 aa).

This sequence belongs to the class-I aminoacyl-tRNA synthetase family. ValS type 1 subfamily. Monomer.

Its subcellular location is the cytoplasm. It catalyses the reaction tRNA(Val) + L-valine + ATP = L-valyl-tRNA(Val) + AMP + diphosphate. Its function is as follows. Catalyzes the attachment of valine to tRNA(Val). As ValRS can inadvertently accommodate and process structurally similar amino acids such as threonine, to avoid such errors, it has a 'posttransfer' editing activity that hydrolyzes mischarged Thr-tRNA(Val) in a tRNA-dependent manner. The polypeptide is Valine--tRNA ligase (Halalkalibacterium halodurans (strain ATCC BAA-125 / DSM 18197 / FERM 7344 / JCM 9153 / C-125) (Bacillus halodurans)).